A 176-amino-acid polypeptide reads, in one-letter code: Large ribosomal subunit protein uL10 (176 aa).

The protein belongs to the universal ribosomal protein uL10 family. As to quaternary structure, part of the ribosomal stalk of the 50S ribosomal subunit. The N-terminus interacts with L11 and the large rRNA to form the base of the stalk. The C-terminus forms an elongated spine to which L12 dimers bind in a sequential fashion forming a multimeric L10(L12)X complex.

Functionally, forms part of the ribosomal stalk, playing a central role in the interaction of the ribosome with GTP-bound translation factors. This Nocardia farcinica (strain IFM 10152) protein is Large ribosomal subunit protein uL10.